Reading from the N-terminus, the 55-residue chain is Preprotein translocase subunit SecG (55 aa).

Over 1 to 31 the chain is Cytoplasmic; sequence MPKNNTNENFQSGAGLIRYFNEEEIKGPALD. A helical membrane pass occupies residues 32–51; that stretch reads PKLIIYIGIAMAVIVELAKI. Topologically, residues 52–55 are extracellular; sequence FWPV.

It belongs to the SEC61-beta family. In terms of assembly, component of the protein translocase complex. Heterotrimer consisting of alpha (SecY), beta (SecG) and gamma (SecE) subunits. Can form oligomers of the heterotrimer.

The protein localises to the cell membrane. Functionally, involved in protein export. The function of the beta subunit is unknown, but it may be involved in stabilization of the trimeric complex. This chain is Preprotein translocase subunit SecG, found in Picrophilus torridus (strain ATCC 700027 / DSM 9790 / JCM 10055 / NBRC 100828 / KAW 2/3).